The following is a 477-amino-acid chain: Nuclear receptor subfamily 6 group A member 1-A (477 aa).

Residues 40 to 115 (QRSCLICGDR…MGMNRKAIRE (76 aa)) constitute a DNA-binding region (nuclear receptor). 2 NR C4-type zinc fingers span residues 43–63 (CLIC…CEGC) and 79–98 (CSRD…CQYC). The interval 147 to 187 (DEANMPEHTWGNNGDSDHSSPGNGVSDGNQPSPVSTLSSNR) is disordered. The span at 156–187 (WGNNGDSDHSSPGNGVSDGNQPSPVSTLSSNR) shows a compositional bias: polar residues. One can recognise an NR LBD domain in the interval 230 to 461 (QSHTLIGQLV…HSCKSSLSSY (232 aa)).

It belongs to the nuclear hormone receptor family. NR6 subfamily. Homodimer. As to expression, expressed in germ cells, being predominant in previtellogenic oocytes in the ovary and in spermatocytes in the testis.

Its subcellular location is the nucleus. In terms of biological role, probable orphan nuclear receptor. Binds to a response element containing repeats of the motif 5'-AGGTCA-3'. This chain is Nuclear receptor subfamily 6 group A member 1-A, found in Danio rerio (Zebrafish).